The primary structure comprises 494 residues: Lipopolysaccharide core galacturonosyltransferase RgtB (494 aa).

Helical transmembrane passes span 9-29, 74-94, 104-124, 127-147, 156-176, 197-217, 251-271, 291-311, 316-336, and 345-365; these read ISWI…VRLA, LTAL…LYGL, ALVA…FEMQ, LTHT…FIRS, YLIA…FAIL, WRLG…LFWL, LALA…IVFG, MMLV…AAGI, LVPM…AAGV, and FIPV…GSVA.

It belongs to the glycosyltransferase 83 family.

The protein resides in the cell inner membrane. It functions in the pathway bacterial outer membrane biogenesis; LPS core biosynthesis. Functionally, involved in the modification of the lipopolysaccharide (LPS) inner core. Catalyzes the transfer of a galacturonic acid (GalA) residue to the 5-position of the outer Kdo (3-deoxy-D-manno-octulosonic acid) residue of the LPS inner core, using dodecaprenyl phosphate-GalA as the donor substrate. Acts after the other GalA transferase RgtA. The chain is Lipopolysaccharide core galacturonosyltransferase RgtB from Rhizobium johnstonii (strain DSM 114642 / LMG 32736 / 3841) (Rhizobium leguminosarum bv. viciae).